The primary structure comprises 85 residues: Probable [Fe-S]-dependent transcriptional repressor (85 aa).

4 residues coordinate iron-sulfur cluster: C56, C61, C64, and C71.

The protein belongs to the FeoC family.

Its function is as follows. May function as a transcriptional regulator that controls feoABC expression. This chain is Probable [Fe-S]-dependent transcriptional repressor, found in Yersinia pseudotuberculosis serotype O:1b (strain IP 31758).